The following is a 312-amino-acid chain: Polyamine aminopropyltransferase (312 aa).

Residues 7-247 form the PABS domain; the sequence is FFWAQEYFTP…GPLGFALAAQ (241 aa). Gln36 provides a ligand contact to S-methyl-5'-thioadenosine. Residues His67 and Glu95 each contribute to the spermidine site. S-methyl-5'-thioadenosine is bound by residues Asp115 and 147-148; that span reads DA. The Proton acceptor role is filled by Asp165. S-methyl-5'-thioadenosine is bound at residue Pro174.

Belongs to the spermidine/spermine synthase family. Homodimer or homotetramer.

Its subcellular location is the cytoplasm. The enzyme catalyses S-adenosyl 3-(methylsulfanyl)propylamine + putrescine = S-methyl-5'-thioadenosine + spermidine + H(+). The protein operates within amine and polyamine biosynthesis; spermidine biosynthesis; spermidine from putrescine: step 1/1. Functionally, catalyzes the irreversible transfer of a propylamine group from the amino donor S-adenosylmethioninamine (decarboxy-AdoMet) to putrescine (1,4-diaminobutane) to yield spermidine. This is Polyamine aminopropyltransferase from Synechococcus sp. (strain JA-3-3Ab) (Cyanobacteria bacterium Yellowstone A-Prime).